The chain runs to 782 residues: E3 UFM1-protein ligase 1 homolog (782 aa).

A disordered region spans residues 404–477 (NASTQELEDD…GSRGGGGVNK (74 aa)). Over residues 443–453 (KSTKKHQRGKA) the composition is skewed to basic residues.

The protein belongs to the UFL1 family.

Its function is as follows. E3 UFM1-protein ligase that mediates ufmylation of target proteins. This is E3 UFM1-protein ligase 1 homolog from Drosophila erecta (Fruit fly).